Here is a 44-residue protein sequence, read N- to C-terminus: Cytochrome b559 subunit beta (44 aa).

Residues 19 to 35 (WLAIHGIAVPTIFFLGA) form a helical membrane-spanning segment. Histidine 23 provides a ligand contact to heme.

This sequence belongs to the PsbE/PsbF family. As to quaternary structure, heterodimer of an alpha subunit and a beta subunit. PSII is composed of 1 copy each of membrane proteins PsbA, PsbB, PsbC, PsbD, PsbE, PsbF, PsbH, PsbI, PsbJ, PsbK, PsbL, PsbM, PsbT, PsbX, PsbY, PsbZ, Psb30/Ycf12, at least 3 peripheral proteins of the oxygen-evolving complex and a large number of cofactors. It forms dimeric complexes. Heme b is required as a cofactor.

Its subcellular location is the plastid. It localises to the chloroplast thylakoid membrane. Functionally, this b-type cytochrome is tightly associated with the reaction center of photosystem II (PSII). PSII is a light-driven water:plastoquinone oxidoreductase that uses light energy to abstract electrons from H(2)O, generating O(2) and a proton gradient subsequently used for ATP formation. It consists of a core antenna complex that captures photons, and an electron transfer chain that converts photonic excitation into a charge separation. In Chlamydomonas reinhardtii (Chlamydomonas smithii), this protein is Cytochrome b559 subunit beta.